Consider the following 499-residue polypeptide: Calcium/calmodulin-dependent protein kinase type II subunit delta (499 aa).

Ala-2 carries the N-acetylalanine modification. In terms of domain architecture, Protein kinase spans 14-272 (YQLFEELGKG…ASEALKHPWI (259 aa)). ATP-binding positions include 20-28 (LGKGAFSVV) and Lys-43. Asp-136 (proton acceptor) is an active-site residue. The interval 283 to 292 (HRQETVDCLK) is autoinhibitory domain. Phosphothreonine; by autocatalysis is present on Thr-287. The interval 291-301 (LKKFNARRKLK) is calmodulin-binding. Residues Thr-306 and Thr-307 each carry the phosphothreonine; by autocatalysis modification. A Phosphoserine modification is found at Ser-315. Lys-318 is modified (N6-acetyllysine). 2 positions are modified to phosphoserine: Ser-319 and Ser-330. Thr-331 is subject to Phosphothreonine. A Phosphoserine modification is found at Ser-333. A phosphothreonine mark is found at Thr-336 and Thr-337. Phosphoserine is present on residues Ser-404, Ser-490, and Ser-494.

This sequence belongs to the protein kinase superfamily. CAMK Ser/Thr protein kinase family. CaMK subfamily. CAMK2 is composed of 4 different chains: alpha (CAMK2A), beta (CAMK2B), gamma (CAMK2G), and delta (CAMK2D). The different isoforms assemble into homo- or heteromultimeric holoenzymes composed of 12 subunits with two hexameric rings stacked one on top of the other. Interacts with RRAD and CACNB2. Post-translationally, autophosphorylation of Thr-287 following activation by Ca(2+)/calmodulin. Phosphorylation of Thr-287 locks the kinase into an activated state. In terms of tissue distribution, expressed in cardiac muscle and skeletal muscle. Isoform Delta 3, isoform Delta 2, isoform Delta 8 and isoform Delta 9 are expressed in cardiac muscle. Isoform Delta 11 is expressed in skeletal muscle.

It is found in the cell membrane. The protein resides in the sarcolemma. Its subcellular location is the sarcoplasmic reticulum membrane. The enzyme catalyses L-seryl-[protein] + ATP = O-phospho-L-seryl-[protein] + ADP + H(+). The catalysed reaction is L-threonyl-[protein] + ATP = O-phospho-L-threonyl-[protein] + ADP + H(+). Activated by Ca(2+)/calmodulin. Binding of calmodulin results in conformational change that relieves intrasteric autoinhibition and allows autophosphorylation of Thr-287 which turns the kinase in a constitutively active form and confers to the kinase a Ca(2+)-independent activity. Its function is as follows. Calcium/calmodulin-dependent protein kinase involved in the regulation of Ca(2+) homeostatis and excitation-contraction coupling (ECC) in heart by targeting ion channels, transporters and accessory proteins involved in Ca(2+) influx into the myocyte, Ca(2+) release from the sarcoplasmic reticulum (SR), SR Ca(2+) uptake and Na(+) and K(+) channel transport. Targets also transcription factors and signaling molecules to regulate heart function. In its activated form, is involved in the pathogenesis of dilated cardiomyopathy and heart failure. Contributes to cardiac decompensation and heart failure by regulating SR Ca(2+) release via direct phosphorylation of RYR2 Ca(2+) channel on 'Ser-2808'. In the nucleus, phosphorylates the MEF2 repressor HDAC4, promoting its nuclear export and binding to 14-3-3 protein, and expression of MEF2 and genes involved in the hypertrophic program. Is essential for left ventricular remodeling responses to myocardial infarction. In pathological myocardial remodeling acts downstream of the beta adrenergic receptor signaling cascade to regulate key proteins involved in ECC. Regulates Ca(2+) influx to myocytes by binding and phosphorylating the L-type Ca(2+) channel subunit beta-2 CACNB2. In addition to Ca(2+) channels, can target and regulate the cardiac sarcolemmal Na(+) channel Nav1.5/SCN5A and the K+ channel Kv4.3/KCND3, which contribute to arrhythmogenesis in heart failure. Phosphorylates phospholamban (PLN/PLB), an endogenous inhibitor of SERCA2A/ATP2A2, contributing to the enhancement of SR Ca(2+) uptake that may be important in frequency-dependent acceleration of relaxation (FDAR) and maintenance of contractile function during acidosis. May participate in the modulation of skeletal muscle function in response to exercise, by regulating SR Ca(2+) transport through phosphorylation of PLN/PLB and triadin, a ryanodine receptor-coupling factor. In response to interferon-gamma (IFN-gamma) stimulation, catalyzes phosphorylation of STAT1, stimulating the JAK-STAT signaling pathway. In Homo sapiens (Human), this protein is Calcium/calmodulin-dependent protein kinase type II subunit delta (CAMK2D).